Here is a 467-residue protein sequence, read N- to C-terminus: Argininosuccinate lyase (467 aa).

It belongs to the lyase 1 family. Argininosuccinate lyase subfamily.

Its subcellular location is the cytoplasm. The enzyme catalyses 2-(N(omega)-L-arginino)succinate = fumarate + L-arginine. It functions in the pathway amino-acid biosynthesis; L-arginine biosynthesis; L-arginine from L-ornithine and carbamoyl phosphate: step 3/3. The protein is Argininosuccinate lyase of Nitrosococcus oceani (strain ATCC 19707 / BCRC 17464 / JCM 30415 / NCIMB 11848 / C-107).